A 715-amino-acid polypeptide reads, in one-letter code: Phosphatidylinositol 4-phosphate 5-kinase 6 (715 aa).

Basic and acidic residues predominate over residues 1-13; that stretch reads MSVAHADDADDYS. The disordered stretch occupies residues 1–21; that stretch reads MSVAHADDADDYSRPTGESYH. 8 MORN repeats span residues 32–54, 55–77, 78–100, 101–123, 124–146, 147–169, 170–192, and 193–214; these read YTGQWRDNLPHGHGKYLWTDGCM, YVGDWHRGKTMGKGRFSWPSGAT, YEGDFKNGYMDGKGTYIDSSGDL, YRGSWVMNLRHGQGTKSYVNGDC, YDGEWRRGLQDGHGRYQWKNENH, YIGQWKNGLMNGNGTMIWSNGNR, YDGSWEDGAPKGNGTFRWSDGSF, and YVGVWSKDPKEQNGTYYPSTSS. The disordered stretch occupies residues 253–306; it reads GASEQSSSGNRTKNSERPRRRSVDGRVSNGEMELRSNGSGYLQVDDNAESTRSS. Polar residues predominate over residues 255–264; the sequence is SEQSSSGNRT. Residues 265 to 276 show a composition bias toward basic and acidic residues; the sequence is KNSERPRRRSVD. A PIPK domain is found at 321-711; it reads TISKGHKNYE…RFRDFIFRVF (391 aa). The interval 671-692 is activation loop; it reads YDISKKLEHAYKSMQYDPTSIS.

The enzyme catalyses a 1,2-diacyl-sn-glycero-3-phospho-(1D-myo-inositol 4-phosphate) + ATP = a 1,2-diacyl-sn-glycero-3-phospho-(1D-myo-inositol-4,5-bisphosphate) + ADP + H(+). This chain is Phosphatidylinositol 4-phosphate 5-kinase 6 (PIP5K6), found in Arabidopsis thaliana (Mouse-ear cress).